The primary structure comprises 506 residues: Maturase K (506 aa).

Belongs to the intron maturase 2 family. MatK subfamily.

Its subcellular location is the plastid. The protein resides in the chloroplast. Functionally, usually encoded in the trnK tRNA gene intron. Probably assists in splicing its own and other chloroplast group II introns. This Austrosteenisia blackii (Blood vine) protein is Maturase K.